Here is an 812-residue protein sequence, read N- to C-terminus: Eukaryotic translation initiation factor 3 subunit C (812 aa).

A disordered region spans residues 1-110 (MSRFFSSNYE…EESDEEDGKK (110 aa)). Acidic residues-rich tracts occupy residues 18–30 (SEEDLLSSSEEDL) and 38–64 (SELDQESDDSFFNESESESEADVDSDD). Residues Ser98, Ser99, and Ser103 each carry the phosphoserine modification. The PCI domain occupies 608–783 (YHQHINLDLI…TIFVVEKGDE (176 aa)).

The protein belongs to the eIF-3 subunit C family. The eukaryotic translation initiation factor 3 (eIF-3) core complex is composed of TIF32, PRT1, NIP1, TIF34 and TIF35. A subcomplex of TIF32, NIP1 and PRT1 mediates the interaction with eIF-1, TIF5/eIF-5 and HCR1. The factors eIF-1, eIF-2, eIF-3, TIF5/eIF-5 and methionyl-tRNAi form a multifactor complex (MFC) that may bind to the 40S ribosome. TIF32, NIP1 and TIF5/eIF-5 comprise a minimal 40S-ribosome-binding unit. NIP1 interacts with TIF5/eIF-5 and SUI1.

It localises to the cytoplasm. Functionally, component of the eukaryotic translation initiation factor 3 (eIF-3) complex, which is involved in protein synthesis of a specialized repertoire of mRNAs and, together with other initiation factors, stimulates binding of mRNA and methionyl-tRNAi to the 40S ribosome. The eIF-3 complex specifically targets and initiates translation of a subset of mRNAs involved in cell proliferation. The sequence is that of Eukaryotic translation initiation factor 3 subunit C from Saccharomyces cerevisiae (strain ATCC 204508 / S288c) (Baker's yeast).